A 312-amino-acid chain; its full sequence is MKSLKVALIGSGAVGTSFLYAAMSRGLASEYMVIDINEKSQVGNVFDLQDAVPSSPQYSKVIAGDYKQLKDYDFIFIGAGRPQKQGGETRLQLLEGNVEIMKNIAKAVKESGFKGITLIASNPVDIMAYTYLKVTGFEPNKVIGSGTLLDSARLKFAIAEKYGMSSRDVQAYVLGEHGDSSVSIISSAKIAGLPLKHFSKASDIEKEFAEIDHFIRRRAYEIIERKGATFYGIGEATAEVAELILRDTKEVRVVASLINGQYGAKDVMFGTPCVLGRNGVEKILEIELSATEKAGLDKSIQVLKDNIKLAKL.

NAD(+)-binding residues include Val-14, Asp-35, and Tyr-66. Residues Gln-83, Arg-90, and 122-125 each bind substrate; that span reads NPVD. NAD(+) contacts are provided by residues 120–122 and Ser-145; that span reads ASN. Residue 150 to 153 coordinates substrate; that stretch reads DSAR. His-177 functions as the Proton acceptor in the catalytic mechanism. Residue Tyr-220 is modified to Phosphotyrosine. Thr-229 lines the substrate pocket.

Belongs to the LDH/MDH superfamily. LDH family. As to quaternary structure, homotetramer.

The protein resides in the cytoplasm. The catalysed reaction is (S)-lactate + NAD(+) = pyruvate + NADH + H(+). Its pathway is fermentation; pyruvate fermentation to lactate; (S)-lactate from pyruvate: step 1/1. Functionally, catalyzes the conversion of lactate to pyruvate. The protein is L-lactate dehydrogenase of Mycoplasma pneumoniae (strain ATCC 29342 / M129 / Subtype 1) (Mycoplasmoides pneumoniae).